Consider the following 154-residue polypeptide: Prefoldin subunit alpha (154 aa).

Positions 119 to 154 (EKAEVETEMEELEQQAQQMQQQQMQQMMQQQEQEDE) are disordered. Residues 132–154 (QQAQQMQQQQMQQMMQQQEQEDE) are compositionally biased toward low complexity.

Belongs to the prefoldin subunit alpha family. As to quaternary structure, heterohexamer of two alpha and four beta subunits.

The protein resides in the cytoplasm. In terms of biological role, molecular chaperone capable of stabilizing a range of proteins. Seems to fulfill an ATP-independent, HSP70-like function in archaeal de novo protein folding. The polypeptide is Prefoldin subunit alpha (Haloarcula marismortui (strain ATCC 43049 / DSM 3752 / JCM 8966 / VKM B-1809) (Halobacterium marismortui)).